We begin with the raw amino-acid sequence, 247 residues long: MRFLLSNDDGYFAPGIEALAAGLATLGTVTVVAPERDRSGASNSLTLDRPLMLRRAPNGFHFVNGTPTDCVHLAVTGMLDQQPDMVISGINHGANMGDDTVYSGTVAAATEGFLLGVPSLAVSLAAKPGEHLDTAVQVTLDIVRRMMDRPFTEPTLLNINVPDRPFHELRGTVATRLGRRHHAEPVVKSVNPRGDVVYWVGAAGPAQDAGEGTDFHAVREGFVSVTPLSIDLTGYRQLAELPAWLNP.

A divalent metal cation is bound by residues Asp-8, Asp-9, Ser-39, and Asn-91.

This sequence belongs to the SurE nucleotidase family. Requires a divalent metal cation as cofactor.

It is found in the cytoplasm. It catalyses the reaction a ribonucleoside 5'-phosphate + H2O = a ribonucleoside + phosphate. In terms of biological role, nucleotidase that shows phosphatase activity on nucleoside 5'-monophosphates. The chain is 5'-nucleotidase SurE from Laribacter hongkongensis (strain HLHK9).